The chain runs to 422 residues: UDP-N-acetylglucosamine 1-carboxyvinyltransferase (422 aa).

Residue 22-23 participates in phosphoenolpyruvate binding; it reads KN. UDP-N-acetyl-alpha-D-glucosamine is bound at residue Arg93. The active-site Proton donor is the Cys117. Cys117 is modified (2-(S-cysteinyl)pyruvic acid O-phosphothioketal). UDP-N-acetyl-alpha-D-glucosamine contacts are provided by residues 122-126, Asp308, and Ile330; that span reads RPVDL.

It belongs to the EPSP synthase family. MurA subfamily.

Its subcellular location is the cytoplasm. It catalyses the reaction phosphoenolpyruvate + UDP-N-acetyl-alpha-D-glucosamine = UDP-N-acetyl-3-O-(1-carboxyvinyl)-alpha-D-glucosamine + phosphate. It participates in cell wall biogenesis; peptidoglycan biosynthesis. In terms of biological role, cell wall formation. Adds enolpyruvyl to UDP-N-acetylglucosamine. This chain is UDP-N-acetylglucosamine 1-carboxyvinyltransferase, found in Legionella pneumophila (strain Paris).